We begin with the raw amino-acid sequence, 361 residues long: Protein Csal_2339 (361 aa).

Catalysis depends on Ser91, which acts as the Proton acceptor. Substrate-binding positions include 92-93 (GS) and 259-260 (GT).

Belongs to the proline racemase family.

It catalyses the reaction trans-4-hydroxy-L-proline = cis-4-hydroxy-D-proline. Its function is as follows. In vitro, catalyzes the epimerization of trans-4-hydroxy-L-proline (t4LHyp) to cis-4-hydroxy-D-proline (c4DHyp), albeit with very low efficiency. The physiological substrate may be different. Displays neither proline racemase activity nor t3LHyp dehydratase activity. This is Protein Csal_2339 from Chromohalobacter salexigens (strain ATCC BAA-138 / DSM 3043 / CIP 106854 / NCIMB 13768 / 1H11).